The following is a 343-amino-acid chain: ATP-dependent (S)-NAD(P)H-hydrate dehydratase (343 aa).

The N-terminal 42 residues, 1-42 (MAVCPYGAAAVVMALLSAAIAFHCSPLLAVLQRALSLHTAHA), are a transit peptide targeting the mitochondrion. The YjeF C-terminal domain maps to 49–340 (LFQLVRNIVP…AEVGAAFSKL (292 aa)). Lysine 63 is modified (N6-acetyllysine). Tyrosine 81 is subject to Phosphotyrosine. (6S)-NADPHX-binding positions include glycine 149 and 202 to 208 (NHVEFSR). ATP contacts are provided by residues 242 to 246 (KGEQD) and 261 to 270 (GSSRRCGGQG). A (6S)-NADPHX-binding site is contributed by aspartate 271.

The protein belongs to the NnrD/CARKD family. Mg(2+) serves as cofactor.

The protein resides in the mitochondrion. It carries out the reaction (6S)-NADHX + ATP = ADP + phosphate + NADH + H(+). The catalysed reaction is (6S)-NADPHX + ATP = ADP + phosphate + NADPH + H(+). In terms of biological role, catalyzes the dehydration of the S-form of NAD(P)HX at the expense of ATP, which is converted to ADP. Together with NAD(P)HX epimerase, which catalyzes the epimerization of the S- and R-forms, the enzyme allows the repair of both epimers of NAD(P)HX, a damaged form of NAD(P)H that is a result of enzymatic or heat-dependent hydration. This Rattus norvegicus (Rat) protein is ATP-dependent (S)-NAD(P)H-hydrate dehydratase.